Reading from the N-terminus, the 380-residue chain is Protein phosphatase methylesterase 1 (380 aa).

The disordered stretch occupies residues 1-38; sequence MSALEKSMHLGRLPSRPPLPGSGGSQSGAKMRMGPGRK. S15 is modified (phosphoserine). Asymmetric dimethylarginine; alternate is present on R16. An Omega-N-methylarginine; alternate modification is found at R16. Residue S42 is modified to Phosphoserine. Residues S156 and D181 contribute to the active site. Positions 255 to 265 are enriched in acidic residues; the sequence is IEEEEEDEEGS. The interval 255–280 is disordered; it reads IEEEEEDEEGSESVNKRKKEDDMETK. The span at 268 to 280 shows a compositional bias: basic and acidic residues; sequence VNKRKKEDDMETK. H349 is an active-site residue.

Belongs to the AB hydrolase superfamily. Binds PPP2CA and PPP2CB. Post-translationally, phosphorylated by SIK1 following increases in intracellular sodium, leading to dissociation from the protein phosphatase 2A (PP2A) complex and subsequent dephosphorylation of sodium/potassium-transporting ATPase ATP1A1.

The enzyme catalyses [phosphatase 2A protein]-C-terminal L-leucine methyl ester + H2O = [phosphatase 2A protein]-C-terminal L-leucine + methanol + H(+). Its function is as follows. Demethylates proteins that have been reversibly carboxymethylated. Demethylates PPP2CB (in vitro) and PPP2CA. Binding to PPP2CA displaces the manganese ion and inactivates the enzyme. The chain is Protein phosphatase methylesterase 1 (PPME1) from Bos taurus (Bovine).